The sequence spans 61 residues: Insect toxin BsIT2 (61 aa).

The region spanning 1–61 (DGYIKKSKGC…RWKYETKTCK (61 aa)) is the LCN-type CS-alpha/beta domain. 4 disulfides stabilise this stretch: Cys-10–Cys-60, Cys-14–Cys-35, Cys-21–Cys-42, and Cys-25–Cys-44.

Belongs to the long (4 C-C) scorpion toxin superfamily. Sodium channel inhibitor family. Beta subfamily. In terms of tissue distribution, expressed by the venom gland.

It localises to the secreted. Its function is as follows. Depressant insect beta-toxins cause a transient contraction paralysis followed by a slow flaccid paralysis. They bind voltage-independently at site-4 of sodium channels (Nav) and shift the voltage of activation toward more negative potentials thereby affecting sodium channel activation and promoting spontaneous and repetitive firing. This toxin is active only on insects. The sequence is that of Insect toxin BsIT2 from Hottentotta tamulus sindicus (Scorpion).